Reading from the N-terminus, the 55-residue chain is ATP synthase protein 8 (55 aa).

Residues 7–28 (ISWFFNFLLAWFFLFIVVTILL) form a helical membrane-spanning segment.

It belongs to the ATPase protein 8 family. F-type ATPases have 2 components, CF(1) - the catalytic core - and CF(0) - the membrane proton channel.

The protein localises to the mitochondrion membrane. Mitochondrial membrane ATP synthase (F(1)F(0) ATP synthase or Complex V) produces ATP from ADP in the presence of a proton gradient across the membrane which is generated by electron transport complexes of the respiratory chain. F-type ATPases consist of two structural domains, F(1) - containing the extramembraneous catalytic core and F(0) - containing the membrane proton channel, linked together by a central stalk and a peripheral stalk. During catalysis, ATP synthesis in the catalytic domain of F(1) is coupled via a rotary mechanism of the central stalk subunits to proton translocation. Part of the complex F(0) domain. Minor subunit located with subunit a in the membrane. This chain is ATP synthase protein 8 (MT-ATP8), found in Pisaster ochraceus (Ochre sea star).